A 220-amino-acid polypeptide reads, in one-letter code: Ribonuclease HII (220 aa).

Residues 1–210 (MKVAGVDEAG…ARKIEERFRK (210 aa)) form the RNase H type-2 domain. D7, E8, and D105 together coordinate a divalent metal cation.

This sequence belongs to the RNase HII family. Requires Mn(2+) as cofactor. Mg(2+) is required as a cofactor.

Its subcellular location is the cytoplasm. The catalysed reaction is Endonucleolytic cleavage to 5'-phosphomonoester.. Functionally, endonuclease that specifically degrades the RNA of RNA-DNA hybrids. The protein is Ribonuclease HII (rnhB) of Pyrococcus horikoshii (strain ATCC 700860 / DSM 12428 / JCM 9974 / NBRC 100139 / OT-3).